Here is a 121-residue protein sequence, read N- to C-terminus: Succinate dehydrogenase assembly factor 3, mitochondrial (121 aa).

The transit peptide at 1–35 (MRPSLVRLVRPRRPERKTSPILPPLKLYKALLRAH) directs the protein to the mitochondrion.

Belongs to the complex I LYR family. SDHAF3 subfamily. In terms of assembly, interacts with the iron-sulfur protein subunit within the SDH catalytic dimer.

Its subcellular location is the mitochondrion matrix. Functionally, plays an essential role in the assembly of succinate dehydrogenase (SDH), an enzyme complex (also referred to as respiratory complex II) that is a component of both the tricarboxylic acid (TCA) cycle and the mitochondrial electron transport chain, and which couples the oxidation of succinate to fumarate with the reduction of ubiquinone (coenzyme Q) to ubiquinol. Promotes maturation of the iron-sulfur protein subunit of the SDH catalytic dimer, protecting it from the deleterious effects of oxidants. May act together with SDHAF1. The polypeptide is Succinate dehydrogenase assembly factor 3, mitochondrial (Debaryomyces hansenii (strain ATCC 36239 / CBS 767 / BCRC 21394 / JCM 1990 / NBRC 0083 / IGC 2968) (Yeast)).